The sequence spans 649 residues: Sodium/nucleoside cotransporter 1 (649 aa).

At 1–80 the chain is on the cytoplasmic side; the sequence is MENDPSRRRE…ARSFCREHMQ (80 aa). Residues 81 to 104 traverse the membrane as a helical segment; sequence LFRWIGTGLLCTGLSAFLLVACLL. Topologically, residues 105-109 are extracellular; it reads DFQRA. The helical transmembrane segment at 110–128 threads the bilayer; it reads LALFVLTCVVLTFLGHRLL. Over 129–147 the chain is Cytoplasmic; sequence KRLLGPKLRRFLKPQGHPR. The helical transmembrane segment at 148–167 threads the bilayer; it reads LLLWFKRGLALAAFLGLVLW. Residues 168-178 lie on the Extracellular side of the membrane; sequence LSLDTSQRPEQ. The helical transmembrane segment at 179 to 195 threads the bilayer; sequence LVSFAGICVFVALLFAC. The Cytoplasmic segment spans residues 196 to 201; it reads SKHHCA. The chain crosses the membrane as a helical span at residues 202-222; the sequence is VSWRAVSWGLGLQFVLGLLVI. Topologically, residues 223–261 are extracellular; sequence RTEPGFIAFEWLGEQIRIFLSYTKAGSSFVFGEALVKDV. Residues 262–283 form a helical membrane-spanning segment; it reads FAFQVLPIIVFFSCVISVLYHV. Topologically, residues 284–294 are cytoplasmic; that stretch reads GLMQWVILKIA. A helical membrane pass occupies residues 295-318; sequence WLMQVTMGTTATETLSVAGNIFVS. The Extracellular segment spans residues 319-337; sequence QTEAPLLIRPYLADMTLSE. The chain crosses the membrane as a helical span at residues 338-360; sequence VHVVMTGGYATIAGSLLGAYISF. Residues 361–366 are Cytoplasmic-facing; that stretch reads GIDATS. The chain crosses the membrane as a helical span at residues 367-386; it reads LIAASVMAAPCALALSKLVY. Over 387–423 the chain is Extracellular; sequence PEVEESKFRREEGVKLTYGDAQNLIEAASTGAAISVK. The chain crosses the membrane as a helical span at residues 424–446; that stretch reads VVANIAANLIAFLAVLDFINAAL. Topologically, residues 447–457 are cytoplasmic; that stretch reads SWLGDMVDIQG. Residues 458–479 form a helical membrane-spanning segment; the sequence is LSFQLICSYILRPVAFLMGVAW. Residues 480–534 lie on the Extracellular side of the membrane; the sequence is EDCPVVAELLGIKLFLNEFVAYQDLSKYKQRRLAGAEEWVGDRKQWISVRAEVLT. A helical membrane pass occupies residues 535 to 558; sequence TFALCGFANFSSIGIMLGGLTSMV. At 559–569 the chain is on the cytoplasmic side; the sequence is PQRKSDFSQIV. The helical transmembrane segment at 570-592 threads the bilayer; the sequence is LRALFTGACVSLVNACMAGILYM. Over 593 to 649 the chain is Extracellular; that stretch reads PRGAEVDCMSLLNTTLSSSSFEIYQCCREAFQSVNPEFSPEALDNCCRFYNHTICAQ. N-linked (GlcNAc...) asparagine glycosylation is found at Asn605 and Asn643.

The protein belongs to the concentrative nucleoside transporter (CNT) (TC 2.A.41) family. Post-translationally, N-glycosylated. N-glycosylation is required for localization to the plasma membrane and the transporter activity. As to expression, expressed in kidney.

The protein resides in the cell membrane. Its subcellular location is the apical cell membrane. It carries out the reaction uridine(out) + Na(+)(out) = uridine(in) + Na(+)(in). The catalysed reaction is thymidine(out) + Na(+)(out) = thymidine(in) + Na(+)(in). The enzyme catalyses cytidine(out) + Na(+)(out) = cytidine(in) + Na(+)(in). It catalyses the reaction adenosine(out) + Na(+)(out) = adenosine(in) + Na(+)(in). With respect to regulation, due to its high apparent affinity but slow transport, adenosine could act as a negative regulator of pyrimidine transport under some conditions. Sodium and pyrimidine nucleoside symporter of the plasma membrane that imports uridine, thymidine and cytidine into cells by coupling their transport to the transmembrane sodium electrochemical gradient. Also transports adenosine, an atypical substrate transported with high apparent affinity, but low maximum velocity. Therefore, exhibits the transport characteristics of the nucleoside transport system cit or N2 subtype (N2/cit). Involved in renal nucleoside (re)absorption. The protein is Sodium/nucleoside cotransporter 1 of Homo sapiens (Human).